The sequence spans 305 residues: Thioredoxin reductase (305 aa).

Residue 28 to 35 (LGIETSSQ) participates in FAD binding. An intrachain disulfide couples Cys129 to Cys132. 272–281 (DCCDWIYRQA) is an FAD binding site.

It belongs to the class-II pyridine nucleotide-disulfide oxidoreductase family. As to quaternary structure, homodimer. The cofactor is FAD.

The protein localises to the cytoplasm. It catalyses the reaction [thioredoxin]-dithiol + NADP(+) = [thioredoxin]-disulfide + NADPH + H(+). This Spironucleus barkhanus protein is Thioredoxin reductase (TRXB).